The following is a 165-amino-acid chain: UPF0254 protein MmarC6_1720 (165 aa).

This sequence belongs to the UPF0254 family.

In Methanococcus maripaludis (strain C6 / ATCC BAA-1332), this protein is UPF0254 protein MmarC6_1720.